Consider the following 128-residue polypeptide: Large ribosomal subunit protein eL8 (128 aa).

The protein belongs to the eukaryotic ribosomal protein eL8 family. As to quaternary structure, part of the 50S ribosomal subunit. Probably part of the RNase P complex.

The protein resides in the cytoplasm. Functionally, multifunctional RNA-binding protein that recognizes the K-turn motif in ribosomal RNA, the RNA component of RNase P, box H/ACA, box C/D and box C'/D' sRNAs. This chain is Large ribosomal subunit protein eL8, found in Ignicoccus hospitalis (strain KIN4/I / DSM 18386 / JCM 14125).